A 260-amino-acid chain; its full sequence is Pyridoxine 5'-phosphate synthase (260 aa).

Asparagine 15 is a binding site for 3-amino-2-oxopropyl phosphate. Residue aspartate 17 to histidine 18 participates in 1-deoxy-D-xylulose 5-phosphate binding. Arginine 26 is a binding site for 3-amino-2-oxopropyl phosphate. The Proton acceptor role is filled by histidine 51. 2 residues coordinate 1-deoxy-D-xylulose 5-phosphate: arginine 53 and histidine 58. The active-site Proton acceptor is the glutamate 78. Position 108 (threonine 108) interacts with 1-deoxy-D-xylulose 5-phosphate. The active-site Proton donor is the histidine 199. 3-amino-2-oxopropyl phosphate contacts are provided by residues glycine 200 and glycine 221–histidine 222.

Belongs to the PNP synthase family. Homooctamer; tetramer of dimers.

The protein localises to the cytoplasm. It carries out the reaction 3-amino-2-oxopropyl phosphate + 1-deoxy-D-xylulose 5-phosphate = pyridoxine 5'-phosphate + phosphate + 2 H2O + H(+). Its pathway is cofactor biosynthesis; pyridoxine 5'-phosphate biosynthesis; pyridoxine 5'-phosphate from D-erythrose 4-phosphate: step 5/5. Functionally, catalyzes the complicated ring closure reaction between the two acyclic compounds 1-deoxy-D-xylulose-5-phosphate (DXP) and 3-amino-2-oxopropyl phosphate (1-amino-acetone-3-phosphate or AAP) to form pyridoxine 5'-phosphate (PNP) and inorganic phosphate. The sequence is that of Pyridoxine 5'-phosphate synthase from Cupriavidus taiwanensis (strain DSM 17343 / BCRC 17206 / CCUG 44338 / CIP 107171 / LMG 19424 / R1) (Ralstonia taiwanensis (strain LMG 19424)).